A 250-amino-acid polypeptide reads, in one-letter code: NAD(P)H-quinone oxidoreductase subunit K, chloroplastic (250 aa).

[4Fe-4S] cluster contacts are provided by cysteine 61, cysteine 62, cysteine 126, and cysteine 157.

This sequence belongs to the complex I 20 kDa subunit family. NDH is composed of at least 16 different subunits, 5 of which are encoded in the nucleus. It depends on [4Fe-4S] cluster as a cofactor.

Its subcellular location is the plastid. It localises to the chloroplast thylakoid membrane. The catalysed reaction is a plastoquinone + NADH + (n+1) H(+)(in) = a plastoquinol + NAD(+) + n H(+)(out). It carries out the reaction a plastoquinone + NADPH + (n+1) H(+)(in) = a plastoquinol + NADP(+) + n H(+)(out). Its function is as follows. NDH shuttles electrons from NAD(P)H:plastoquinone, via FMN and iron-sulfur (Fe-S) centers, to quinones in the photosynthetic chain and possibly in a chloroplast respiratory chain. The immediate electron acceptor for the enzyme in this species is believed to be plastoquinone. Couples the redox reaction to proton translocation, and thus conserves the redox energy in a proton gradient. The protein is NAD(P)H-quinone oxidoreductase subunit K, chloroplastic of Angiopteris evecta (Mule's foot fern).